A 377-amino-acid polypeptide reads, in one-letter code: GTPase Obg (377 aa).

The Obg domain maps to 1 to 159 (MKFVDEATIE…RRLRMELKVL (159 aa)). The segment at 127–148 (NIHFKSSTNRAPRQWTPGKEGE) is disordered. The OBG-type G domain maps to 160–336 (ADVGLLGLPN…LIWALQDYLD (177 aa)). Residues 166-173 (GLPNAGKS), 191-195 (FTTLH), 213-216 (DIPG), 288-291 (NKLD), and 317-319 (SGL) contribute to the GTP site. Mg(2+) contacts are provided by S173 and T193. The segment at 339 to 377 (KRKDQDAQDQADGTYVFEDPRFDASRGGAAPATPPGGDE) is disordered.

The protein belongs to the TRAFAC class OBG-HflX-like GTPase superfamily. OBG GTPase family. As to quaternary structure, monomer. Requires Mg(2+) as cofactor.

The protein localises to the cytoplasm. Its function is as follows. An essential GTPase which binds GTP, GDP and possibly (p)ppGpp with moderate affinity, with high nucleotide exchange rates and a fairly low GTP hydrolysis rate. Plays a role in control of the cell cycle, stress response, ribosome biogenesis and in those bacteria that undergo differentiation, in morphogenesis control. The sequence is that of GTPase Obg from Bordetella bronchiseptica (strain ATCC BAA-588 / NCTC 13252 / RB50) (Alcaligenes bronchisepticus).